We begin with the raw amino-acid sequence, 168 residues long: Cyanate hydratase (168 aa).

Catalysis depends on residues arginine 91, glutamate 94, and serine 117.

Belongs to the cyanase family.

It catalyses the reaction cyanate + hydrogencarbonate + 3 H(+) = NH4(+) + 2 CO2. Functionally, catalyzes the reaction of cyanate with bicarbonate to produce ammonia and carbon dioxide. The chain is Cyanate hydratase from Arabidopsis thaliana (Mouse-ear cress).